A 205-amino-acid chain; its full sequence is MTSAIGNKDMAAPQRVAALNRPNMVSVGTIVFLSQELMFFAGLFAMYFTSRANGIGNGSWKEGAHHLNVPYALVITIILISSSVTAQFGVFAAERGDVFGVRRWFSLTILLGAIFLVGQAYEYFHLVEHGMTIQSSVYGSSFFITTGFHAAHVLAGALAFVVVLLRLSKSKFTPAQATAAMVVSYYWHFVDVVWIGLFITIYFIQ.

A run of 5 helical transmembrane segments spans residues 28–48 (GTIV…AMYF), 72–92 (ALVI…GVFA), 104–124 (WFSL…YEYF), 142–162 (FFIT…AFVV), and 184–204 (SYYW…IYFI).

Belongs to the cytochrome c oxidase subunit 3 family. In terms of assembly, associates with subunits I, II and IV to form cytochrome c oxidase.

It localises to the cell membrane. The catalysed reaction is 4 Fe(II)-[cytochrome c] + O2 + 8 H(+)(in) = 4 Fe(III)-[cytochrome c] + 2 H2O + 4 H(+)(out). This is Cytochrome c oxidase subunit 3 (ctaE) from Corynebacterium diphtheriae (strain ATCC 700971 / NCTC 13129 / Biotype gravis).